The chain runs to 1403 residues: Centrosomal protein of 162 kDa (1403 aa).

Residues 18 to 42 (KELSDDSFENSDKTARQSKKEMKKK) form a disordered region. Ser-157 and Ser-160 each carry phosphoserine. Positions 170–231 (QANAELTDDE…EKISVPKQEE (62 aa)) are disordered. The segment covering 208-231 (TKDEEMPSKENSKSEKISVPKQEE) has biased composition (basic and acidic residues). 2 positions are modified to phosphoserine: Ser-474 and Ser-475. The interval 476–504 (EEEGAVMGKQVPYKKARSAPPLLKRKPQS) is disordered. The segment covering 487 to 502 (PYKKARSAPPLLKRKP) has biased composition (basic residues). Coiled-coil stretches lie at residues 617-670 (KRVQ…QDNY), 698-1121 (VTGE…MLSN), 1171-1206 (EVLQ…QFEN), and 1235-1386 (CQNA…LHRQ).

Belongs to the CEP162 family. In terms of assembly, interacts with CEP290. Interacts with CPNE4. Interacts with alpha-tubulin.

The protein resides in the cytoplasm. The protein localises to the cytoskeleton. It localises to the microtubule organizing center. It is found in the centrosome. Its subcellular location is the centriole. The protein resides in the spindle. The protein localises to the nucleus. In terms of biological role, required to promote assembly of the transition zone in primary cilia. Acts by specifically recognizing and binding the axonemal microtubule. Localizes to the distal ends of centrioles before ciliogenesis and directly binds to axonemal microtubule, thereby promoting and restricting transition zone formation specifically at the cilia base. Required to mediate CEP290 association with microtubules. This Homo sapiens (Human) protein is Centrosomal protein of 162 kDa (CEP162).